Reading from the N-terminus, the 305-residue chain is Protoheme IX farnesyltransferase (305 aa).

9 consecutive transmembrane segments (helical) span residues 31 to 51, 52 to 72, 96 to 118, 123 to 145, 151 to 171, 179 to 199, 225 to 245, 247 to 267, and 281 to 301; these read VMSLVIFTGFVGMWLAPYSVH, PFIAGIAVVCIALGAGSAGAI, VIESDEALSFGLITGFFAVFFMA, LLASFLLLFTIFYYICIYTIWLK, NIVIGGVSGALPPVIGYAAVS, IILFLIIFIWTPPHSWALALF, ILIYSILLFIVSLMPFFIGMN, FIYLIISGILGVVFLYYAGSL, and FAYSIFYLFFIFLLLYSTNTI.

The protein belongs to the UbiA prenyltransferase family. Protoheme IX farnesyltransferase subfamily.

It is found in the cell membrane. The enzyme catalyses heme b + (2E,6E)-farnesyl diphosphate + H2O = Fe(II)-heme o + diphosphate. It functions in the pathway porphyrin-containing compound metabolism; heme O biosynthesis; heme O from protoheme: step 1/1. In terms of biological role, converts heme B (protoheme IX) to heme O by substitution of the vinyl group on carbon 2 of heme B porphyrin ring with a hydroxyethyl farnesyl side group. The chain is Protoheme IX farnesyltransferase from Rickettsia africae (strain ESF-5).